The sequence spans 290 residues: TP53-target gene 5 protein (290 aa).

Residues 1–13 (MSPSAKKRPKNSR) are compositionally biased toward basic residues. 2 disordered regions span residues 1–29 (MSPS…TEQP) and 114–178 (KLES…RQPL). Composition is skewed to basic and acidic residues over residues 16-26 (KMQDEKLRDET), 114-130 (KLES…KEWK), and 138-167 (RNKE…RDDS).

As to quaternary structure, interacts with p53/TP53. In terms of tissue distribution, highly expressed in heart, brain and small intestine. Less abundant in skeletal muscle, spleen, prostate, ovary and colon. A smaller transcript is expressed specifically in the testis.

Its subcellular location is the cytoplasm. The protein localises to the nucleus. May play a significant role in p53/TP53-mediating signaling pathway. This Homo sapiens (Human) protein is TP53-target gene 5 protein (TP53TG5).